Here is a 279-residue protein sequence, read N- to C-terminus: Prohibitin-4, mitochondrial (279 aa).

Position 2 is an N-acetylglycine (glycine 2). Residues 2–6 (GSQQV) lie on the Mitochondrial matrix side of the membrane. A helical; Signal-anchor for type II membrane protein transmembrane segment spans residues 7–28 (AISFLTNLAKAAFGLGVAATAL). Topologically, residues 29 to 279 (NSSLYTVDGG…SMLFNLNPGR (251 aa)) are mitochondrial intermembrane.

It belongs to the prohibitin family. As to quaternary structure, component of a prohibitin multimeric complex in mitochondrial membranes. As to expression, mostly expressed in proliferative tissues, including vasculature, shoot and root apical tissues. Accumulates in dry seeds.

The protein localises to the mitochondrion inner membrane. Its function is as follows. Prohibitin probably acts as a holdase/unfoldase for the stabilization of newly synthesized mitochondrial proteins. This chain is Prohibitin-4, mitochondrial (PHB4), found in Arabidopsis thaliana (Mouse-ear cress).